A 666-amino-acid polypeptide reads, in one-letter code: Putative cysteine-rich receptor-like protein kinase 31 (666 aa).

Positions 1–23 (MCLNTLCAILCFVLTVSFGFVSA) are cleaved as a signal peptide. Gnk2-homologous domains follow at residues 24–130 (QKCG…NNSF) and 136–245 (LEPT…GYKY). Over 24–280 (QKCGESVFFR…PDGKKISTGV (257 aa)) the chain is Extracellular. 5 N-linked (GlcNAc...) asparagine glycosylation sites follow: N52, N62, N104, N127, and N151. The chain crosses the membrane as a helical span at residues 281–301 (IVAIVVSAVIFVVLVALGLVI). Topologically, residues 302 to 666 (WKRRQSYKTL…SASITRATPR (365 aa)) are cytoplasmic. The Protein kinase domain maps to 339–616 (FSRNNKLGQG…IFQMLTNSSI (278 aa)). ATP-binding positions include 345–353 (LGQGGFGEV) and K367. Residue Y412 is modified to Phosphotyrosine. D464 acts as the Proton acceptor in catalysis. Residue S468 is modified to Phosphoserine. Position 504 is a phosphothreonine (T504). Y512 is modified (phosphotyrosine).

This sequence belongs to the protein kinase superfamily. Ser/Thr protein kinase family. CRK subfamily.

It localises to the membrane. It catalyses the reaction L-seryl-[protein] + ATP = O-phospho-L-seryl-[protein] + ADP + H(+). The catalysed reaction is L-threonyl-[protein] + ATP = O-phospho-L-threonyl-[protein] + ADP + H(+). This is Putative cysteine-rich receptor-like protein kinase 31 (CRK31) from Arabidopsis thaliana (Mouse-ear cress).